Reading from the N-terminus, the 443-residue chain is Glutamate-1-semialdehyde 2,1-aminomutase (443 aa).

An N6-(pyridoxal phosphate)lysine modification is found at Lys-272.

Belongs to the class-III pyridoxal-phosphate-dependent aminotransferase family. HemL subfamily. Homodimer. Pyridoxal 5'-phosphate serves as cofactor.

The protein resides in the cytoplasm. It catalyses the reaction (S)-4-amino-5-oxopentanoate = 5-aminolevulinate. It functions in the pathway porphyrin-containing compound metabolism; protoporphyrin-IX biosynthesis; 5-aminolevulinate from L-glutamyl-tRNA(Glu): step 2/2. It participates in porphyrin-containing compound metabolism; chlorophyll biosynthesis. In Chloroflexus aurantiacus (strain ATCC 29366 / DSM 635 / J-10-fl), this protein is Glutamate-1-semialdehyde 2,1-aminomutase.